The chain runs to 430 residues: Adenylosuccinate synthetase (430 aa).

GTP-binding positions include 12 to 18 (GDEGKGK) and 40 to 42 (GHT). Catalysis depends on Asp13, which acts as the Proton acceptor. 2 residues coordinate Mg(2+): Asp13 and Gly40. IMP is bound by residues 13 to 16 (DEGK), 38 to 41 (NAGH), Thr130, Arg144, Gln225, Thr240, and Arg304. His41 serves as the catalytic Proton donor. 300-306 (ATTGRPR) is a binding site for substrate. Residues Arg306, 332-334 (KLD), and 414-416 (SIG) contribute to the GTP site.

It belongs to the adenylosuccinate synthetase family. As to quaternary structure, homodimer. Requires Mg(2+) as cofactor.

The protein resides in the cytoplasm. It carries out the reaction IMP + L-aspartate + GTP = N(6)-(1,2-dicarboxyethyl)-AMP + GDP + phosphate + 2 H(+). Its pathway is purine metabolism; AMP biosynthesis via de novo pathway; AMP from IMP: step 1/2. Plays an important role in the de novo pathway of purine nucleotide biosynthesis. Catalyzes the first committed step in the biosynthesis of AMP from IMP. This chain is Adenylosuccinate synthetase, found in Geobacter metallireducens (strain ATCC 53774 / DSM 7210 / GS-15).